Here is a 183-residue protein sequence, read N- to C-terminus: Large ribosomal subunit protein uL6 (183 aa).

Belongs to the universal ribosomal protein uL6 family. Part of the 50S ribosomal subunit.

This protein binds to the 23S rRNA, and is important in its secondary structure. It is located near the subunit interface in the base of the L7/L12 stalk, and near the tRNA binding site of the peptidyltransferase center. This is Large ribosomal subunit protein uL6 from Mycoplasmoides gallisepticum (strain R(low / passage 15 / clone 2)) (Mycoplasma gallisepticum).